The sequence spans 197 residues: Molybdenum cofactor guanylyltransferase (197 aa).

GTP contacts are provided by residues 10 to 12 (LAG), lysine 23, asparagine 51, aspartate 69, and aspartate 99. Aspartate 99 provides a ligand contact to Mg(2+).

This sequence belongs to the MobA family. As to quaternary structure, monomer. It depends on Mg(2+) as a cofactor.

The protein localises to the cytoplasm. The catalysed reaction is Mo-molybdopterin + GTP + H(+) = Mo-molybdopterin guanine dinucleotide + diphosphate. Its function is as follows. Transfers a GMP moiety from GTP to Mo-molybdopterin (Mo-MPT) cofactor (Moco or molybdenum cofactor) to form Mo-molybdopterin guanine dinucleotide (Mo-MGD) cofactor. In Shewanella sp. (strain MR-4), this protein is Molybdenum cofactor guanylyltransferase.